The chain runs to 436 residues: Acetyl-CoA decarbonylase/synthase complex subunit delta 2 (436 aa).

The protein belongs to the CdhD family. As to quaternary structure, heterodimer of delta and gamma chains. The ACDS complex is made up of alpha, epsilon, beta, gamma and delta chains with a probable stoichiometry of (alpha(2)epsilon(2))(4)-beta(8)-(gamma(1)delta(1))(8) (Potential).

It functions in the pathway one-carbon metabolism; methanogenesis from acetate. In terms of biological role, part of a complex that catalyzes the reversible cleavage of acetyl-CoA, allowing growth on acetate as sole source of carbon and energy. Probably maintains the overall quaternary structure of the ACDS complex. The sequence is that of Acetyl-CoA decarbonylase/synthase complex subunit delta 2 (cdhD2) from Methanosarcina acetivorans (strain ATCC 35395 / DSM 2834 / JCM 12185 / C2A).